The sequence spans 430 residues: UDP-N-acetylmuramoylalanine--D-glutamate ligase (430 aa).

105–111 provides a ligand contact to ATP; sequence GSNGKTT.

This sequence belongs to the MurCDEF family.

It is found in the cytoplasm. It catalyses the reaction UDP-N-acetyl-alpha-D-muramoyl-L-alanine + D-glutamate + ATP = UDP-N-acetyl-alpha-D-muramoyl-L-alanyl-D-glutamate + ADP + phosphate + H(+). Its pathway is cell wall biogenesis; peptidoglycan biosynthesis. Cell wall formation. Catalyzes the addition of glutamate to the nucleotide precursor UDP-N-acetylmuramoyl-L-alanine (UMA). This chain is UDP-N-acetylmuramoylalanine--D-glutamate ligase, found in Pseudothermotoga lettingae (strain ATCC BAA-301 / DSM 14385 / NBRC 107922 / TMO) (Thermotoga lettingae).